The primary structure comprises 156 residues: Ribosomal RNA large subunit methyltransferase H (156 aa).

S-adenosyl-L-methionine contacts are provided by residues L73, G104, and 123-128; that span reads LSALTL.

It belongs to the RNA methyltransferase RlmH family. As to quaternary structure, homodimer.

The protein localises to the cytoplasm. The catalysed reaction is pseudouridine(1915) in 23S rRNA + S-adenosyl-L-methionine = N(3)-methylpseudouridine(1915) in 23S rRNA + S-adenosyl-L-homocysteine + H(+). Its function is as follows. Specifically methylates the pseudouridine at position 1915 (m3Psi1915) in 23S rRNA. This is Ribosomal RNA large subunit methyltransferase H from Shewanella sediminis (strain HAW-EB3).